Reading from the N-terminus, the 482-residue chain is MASIRELHQQLINKERSAVEITTEALERIAAIEPQVKSFLCITADRALETAKAVDQKIAAKEEIGLLAGIPIGIKDNMSTKGIPTTCGSRILENFIPPYESTVTQKLQEIGAVMVGKTNLDEFAMGSSTENSGYQVTANPWDLERVPGGSSGGSAAAVAAEECVVALGSDTGGSIRQPASLCGVVGLKPTYGLVSRFGLVAYGSSLDQIGPFGRTVEDVAIVLGAIAGYDAKDSTSLKLPIPDYTTFLNPSLKGVKIGIIEETFGEGLDSIVAETVNKAIEQLQALGATIERISCPRFRYGLPAYYIIAPSEASANLARYDAVKYGIREEAATLLEMYNKTRAKGFGSEVKRRIMIGTYTLSAGYYDAYYLKAQKVRTLIKQDFDKAFESVDVLVCPTSPTTAFKAGEKTDDPLSMYLSDLMTIPVNLAGLPGMSIPCGFDQQGLPIGLQLVSNVLEEGKLFNVGYAYEQSTEWHKQKPPLK.

Residues lysine 75 and serine 150 each act as charge relay system in the active site. The active-site Acyl-ester intermediate is the serine 174.

The protein belongs to the amidase family. GatA subfamily. Heterotrimer of A, B and C subunits.

It carries out the reaction L-glutamyl-tRNA(Gln) + L-glutamine + ATP + H2O = L-glutaminyl-tRNA(Gln) + L-glutamate + ADP + phosphate + H(+). Allows the formation of correctly charged Gln-tRNA(Gln) through the transamidation of misacylated Glu-tRNA(Gln) in organisms which lack glutaminyl-tRNA synthetase. The reaction takes place in the presence of glutamine and ATP through an activated gamma-phospho-Glu-tRNA(Gln). The chain is Glutamyl-tRNA(Gln) amidotransferase subunit A from Rippkaea orientalis (strain PCC 8801 / RF-1) (Cyanothece sp. (strain PCC 8801)).